A 147-amino-acid polypeptide reads, in one-letter code: Ribosome-binding factor A (147 aa).

The tract at residues 123-147 (LAKLKEGAQPAGDANPYKTSDEEED) is disordered.

Belongs to the RbfA family. In terms of assembly, monomer. Binds 30S ribosomal subunits, but not 50S ribosomal subunits or 70S ribosomes.

Its subcellular location is the cytoplasm. In terms of biological role, one of several proteins that assist in the late maturation steps of the functional core of the 30S ribosomal subunit. Associates with free 30S ribosomal subunits (but not with 30S subunits that are part of 70S ribosomes or polysomes). Required for efficient processing of 16S rRNA. May interact with the 5'-terminal helix region of 16S rRNA. The polypeptide is Ribosome-binding factor A (Corynebacterium aurimucosum (strain ATCC 700975 / DSM 44827 / CIP 107346 / CN-1) (Corynebacterium nigricans)).